The following is a 342-amino-acid chain: MSDVIKTDVLIIGAGPCGLFAAFELGLLDMKAHFVDILDKVGGQCAELYPEKPIYDIPGIPHVSGQGLTDALMEQIKPFHPTFHLGEMVETVEKIGDPAFRCTTDAGKVFECKVLVIAAGGGSFQPKRPPVPGIEAYEGTSVHYAVRKMETFRDKNVLIVGGGDSALDWTLNLHPVAKRITLLHRRDEFRAAPHSVEQMRALVAAGKMDLRLGQVTSLAGTDGKLTGATIKGNDNNVTEIACDAMLPFFGLTMKLGPVANWGIALENNLVPVETSAFETNISGIFAIGDINTYPGKIKLILCGFHEGALMSQKAHRYVYPEKRLVFQYTTSSSSLQKKLGVS.

FAD is bound by residues cysteine 17, aspartate 36, glutamine 44, tyrosine 49, valine 89, phenylalanine 124, aspartate 289, and threonine 330.

It belongs to the ferredoxin--NADP reductase type 2 family. As to quaternary structure, homodimer. FAD serves as cofactor.

It carries out the reaction 2 reduced [2Fe-2S]-[ferredoxin] + NADP(+) + H(+) = 2 oxidized [2Fe-2S]-[ferredoxin] + NADPH. The polypeptide is Ferredoxin--NADP reductase (Bradyrhizobium diazoefficiens (strain JCM 10833 / BCRC 13528 / IAM 13628 / NBRC 14792 / USDA 110)).